Reading from the N-terminus, the 425-residue chain is Histone-binding protein RBBP7 (425 aa).

7 WD repeats span residues 47 to 122, 128 to 173, 181 to 217, 228 to 269, 275 to 312, 318 to 369, and 376 to 403; these read QWLP…KINH, RARY…LRLR, GLSW…KVVD, VVED…HSVD, VNCL…LHSF, EIFQ…LFIH, and ISDF…IWQM.

The protein belongs to the WD repeat RBAP46/RBAP48/MSI1 family. Binds directly to helix 1 of the histone fold of histone H4, a region that is not accessible when H4 is in chromatin.

It is found in the nucleus. In terms of biological role, core histone-binding subunit that may target chromatin remodeling factors, histone acetyltransferases and histone deacetylases to their histone substrates in a manner that is regulated by nucleosomal DNA. Component of several complexes which regulate chromatin metabolism. This Xenopus laevis (African clawed frog) protein is Histone-binding protein RBBP7 (rbbp7).